The primary structure comprises 111 residues: UPF0060 membrane protein Aave_2845 (111 aa).

4 helical membrane passes run 7–27, 33–53, 63–83, and 90–110; these read FLLYAVTALAEIAGCYLPWLW, SAWLLVPGAACLALFAWLLTL, AAYGGVYVAVALGWLWAVDGI, and LAGAAVTLAGMAIIAFAPRGA.

It belongs to the UPF0060 family.

It localises to the cell inner membrane. The polypeptide is UPF0060 membrane protein Aave_2845 (Paracidovorax citrulli (strain AAC00-1) (Acidovorax citrulli)).